A 94-amino-acid polypeptide reads, in one-letter code: Large ribosomal subunit protein bL28 (94 aa).

A disordered region spans residues 1 to 21 (MARRCEVTGRGTVSGNNVSHS). Residues 11-20 (GTVSGNNVSH) show a composition bias toward polar residues.

This sequence belongs to the bacterial ribosomal protein bL28 family.

This chain is Large ribosomal subunit protein bL28, found in Leptospira borgpetersenii serovar Hardjo-bovis (strain JB197).